The following is a 620-amino-acid chain: Cilia- and flagella-associated protein 52 (620 aa).

WD repeat units follow at residues 62–106 (GHSN…LMAR), 109–150 (LHKG…AICG), 156–195 (LNVG…RKIW), 203–242 (QMKR…LADT), 288–327 (QLQG…ETLV), 330–369 (CHFE…ELLR), 372–411 (VPNM…LMYV), 415–454 (AHRI…QKLE), 459–498 (EHKS…RNQM), 500–539 (LANT…GIRE), 543–582 (SLSG…VTHV), and 585–620 (GHSG…PFPS).

The protein belongs to the CFAP52 family. Microtubule inner protein component of sperm flagellar doublet microtubules. Interacts with BRCA2. Interacts with the CCT chaperonin complex. Interacts with HSP70. Interacts with AK8. Interacts with CFAP45. Interacts with DNAI1. Interacts with IQDC. In terms of tissue distribution, expressed in respiratory cells and sperm (at protein level).

The protein resides in the cytoplasm. It localises to the cytoskeleton. It is found in the cilium axoneme. Its subcellular location is the flagellum axoneme. Its function is as follows. Microtubule inner protein (MIP) part of the dynein-decorated doublet microtubules (DMTs) in cilia axoneme. Important for proper ciliary and flagellar beating. May act in cooperation with CFAP45 and axonemal dynein subunit DNAH11. May play a role in cell growth and/or survival. In Sus scrofa (Pig), this protein is Cilia- and flagella-associated protein 52 (CFAP52).